The chain runs to 707 residues: Lipase maturation factor 2 (707 aa).

Transmembrane regions (helical) follow at residues 10 to 30, 78 to 98, 102 to 122, 126 to 146, 158 to 178, 220 to 240, 256 to 276, 309 to 329, 358 to 378, and 395 to 415; these read AFLW…YVQI, MELI…FSCL, LVFL…QVFL, WDSL…LHAM, GVTF…SGVV, FSVV…FLPF, ILII…VLCC, LVSL…VKYF, ITFP…LKGM, and LQWL…LVPY. Asparagine 483 is a glycosylation site (N-linked (GlcNAc...) asparagine). The chain crosses the membrane as a helical span at residues 634-654; it reads LLLHSFIFGIFTIYFLQAMFG. The interval 661-707 is disordered; it reads VAKQRHSMPPNEKKKQKPNSGQGESASSKSSGHGTDTVRRNKKNEKS. Residues 680–694 show a composition bias toward low complexity; it reads SGQGESASSKSSGHG. The span at 696–707 shows a compositional bias: basic and acidic residues; that stretch reads DTVRRNKKNEKS.

The protein belongs to the lipase maturation factor family.

It localises to the endoplasmic reticulum membrane. Its function is as follows. Involved in the maturation of specific proteins in the endoplasmic reticulum. The protein is Lipase maturation factor 2 (lmf2) of Xenopus laevis (African clawed frog).